The chain runs to 76 residues: Acyl carrier protein (76 aa).

The 76-residue stretch at 1 to 76 (MSLEEKVKNI…DVIEYIKAHT (76 aa)) folds into the Carrier domain. Ser36 carries the post-translational modification O-(pantetheine 4'-phosphoryl)serine.

This sequence belongs to the acyl carrier protein (ACP) family. In terms of processing, 4'-phosphopantetheine is transferred from CoA to a specific serine of apo-ACP by AcpS. This modification is essential for activity because fatty acids are bound in thioester linkage to the sulfhydryl of the prosthetic group.

The protein localises to the cytoplasm. It functions in the pathway lipid metabolism; fatty acid biosynthesis. Its function is as follows. Carrier of the growing fatty acid chain in fatty acid biosynthesis. This chain is Acyl carrier protein, found in Desulfatibacillum aliphaticivorans.